We begin with the raw amino-acid sequence, 585 residues long: MPALRKHPHTATKHLFVTGGVVSSLGKGLTASSLGQLLTARGLQVTMQKLDPYLNVDPGTMNPFQHGEVFVTEDGAETDLDVGHYERFLDRNLSGSANVTTGQVYSTVIAKERRGEYLGDTVQVIPHITDEIKRRVLEMAEPDEDGNRPDVVITEVGGTVGDIESLPFLEAARQVRHEVGRENCFFLHCSLVPFMAPSGELKTKPTQHSVAALRSIGIQPDALILRCDRDVPESLKNKIALMCDVDIDGVISTPDAPSIYDIPKVLHREELDAYVVRRLNLAFRDVDWTQWNDLLHRVHEPRETVRIALVGKYIDLSDAYLSVAEALRAGGFAHHAKVEIRWIPSDDCETDVGAATALSDVDGVLIPGGFGIRGIEGKVGAIRYARKRGLPLLGLCLGLQCIVIEAARSVGLTEASSAEFDPDTPDPVISTMADQRDAVAGEADLGGTMRLGAYPAVLQKNSLVAKAYDATEVSERHRHRYEVNNAYRERIAESGLQFSGTSPDGQLVEFVEYPADVHPFLVGTQAHPELKSRPTRPHPLFVAFVGAAVEYNNGERLPVDIPAIPTADHQSNGAEHALEDAPARG.

Residues 1-281 (MPALRKHPHT…DAYVVRRLNL (281 aa)) form an amidoligase domain region. Serine 23 lines the CTP pocket. Residue serine 23 coordinates UTP. ATP contacts are provided by residues 24–29 (SLGKGL) and aspartate 81. Mg(2+)-binding residues include aspartate 81 and glutamate 155. Residues 162–164 (DIE), 202–207 (KTKPTQ), and lysine 238 contribute to the CTP site. UTP contacts are provided by residues 202–207 (KTKPTQ) and lysine 238. In terms of domain architecture, Glutamine amidotransferase type-1 spans 306–554 (RIALVGKYID…VGAAVEYNNG (249 aa)). An L-glutamine-binding site is contributed by glycine 369. Cysteine 396 functions as the Nucleophile; for glutamine hydrolysis in the catalytic mechanism. Residues 397–400 (LGLQ), glutamate 419, and arginine 480 each bind L-glutamine. Active-site residues include histidine 527 and glutamate 529. Positions 564 to 585 (IPTADHQSNGAEHALEDAPARG) are disordered. Residues 576–585 (HALEDAPARG) are compositionally biased toward basic and acidic residues.

This sequence belongs to the CTP synthase family. As to quaternary structure, homotetramer.

It catalyses the reaction UTP + L-glutamine + ATP + H2O = CTP + L-glutamate + ADP + phosphate + 2 H(+). It carries out the reaction L-glutamine + H2O = L-glutamate + NH4(+). The enzyme catalyses UTP + NH4(+) + ATP = CTP + ADP + phosphate + 2 H(+). It participates in pyrimidine metabolism; CTP biosynthesis via de novo pathway; CTP from UDP: step 2/2. With respect to regulation, allosterically activated by GTP, when glutamine is the substrate; GTP has no effect on the reaction when ammonia is the substrate. The allosteric effector GTP functions by stabilizing the protein conformation that binds the tetrahedral intermediate(s) formed during glutamine hydrolysis. Inhibited by the product CTP, via allosteric rather than competitive inhibition. Catalyzes the ATP-dependent amination of UTP to CTP with either L-glutamine or ammonia as the source of nitrogen. Regulates intracellular CTP levels through interactions with the four ribonucleotide triphosphates. The protein is CTP synthase of Mycolicibacterium gilvum (strain PYR-GCK) (Mycobacterium gilvum (strain PYR-GCK)).